Reading from the N-terminus, the 281-residue chain is MKRVAIFGHPVIHSRSPLVHGYWLKQHGIAGDYVRHDVAPDEAEAFFARFAEQGYAGGNVTIPHKEVAFNALAEADPVARALGVANTLWLEDGRLFGANTDAPGFLSNLDVTAPGWDANPRVALVLGAGGASRAVLYGFLQRGFDKVLLANRTLARAEALAAHFGPRVVPIGWDGVSASLKEAQVVANTTSLGMKGQPPLDLDLSVLADDAVVADVVYVPLETPLLKAAKARGLRTVDGLGMLLHQAVPGFARWFGVTPQVDAGLRDLIVADLAAKGQLGA.

Shikimate is bound by residues 14-16 (SRS) and Thr61. The active-site Proton acceptor is the Lys65. Positions 86 and 101 each coordinate shikimate. NADP(+) is bound by residues 127–131 (GAGGA), 151–156 (NRTLAR), and Val216. Position 218 (Tyr218) interacts with shikimate. Gly239 provides a ligand contact to NADP(+).

The protein belongs to the shikimate dehydrogenase family. Homodimer.

The catalysed reaction is shikimate + NADP(+) = 3-dehydroshikimate + NADPH + H(+). It participates in metabolic intermediate biosynthesis; chorismate biosynthesis; chorismate from D-erythrose 4-phosphate and phosphoenolpyruvate: step 4/7. Its function is as follows. Involved in the biosynthesis of the chorismate, which leads to the biosynthesis of aromatic amino acids. Catalyzes the reversible NADPH linked reduction of 3-dehydroshikimate (DHSA) to yield shikimate (SA). The chain is Shikimate dehydrogenase (NADP(+)) from Azorhizobium caulinodans (strain ATCC 43989 / DSM 5975 / JCM 20966 / LMG 6465 / NBRC 14845 / NCIMB 13405 / ORS 571).